The primary structure comprises 125 residues: Histone H2A.v3 (125 aa).

Belongs to the histone H2A family. The nucleosome is a histone octamer containing two molecules each of H2A, H2B, H3 and H4 assembled in one H3-H4 heterotetramer and two H2A-H2B heterodimers. The octamer wraps approximately 147 bp of DNA.

The protein localises to the nucleus. The protein resides in the chromosome. Functionally, core component of nucleosome which plays a central role in DNA double strand break (DSB) repair. Nucleosomes wrap and compact DNA into chromatin, limiting DNA accessibility to the cellular machineries which require DNA as a template. Histones thereby play a central role in transcription regulation, DNA repair, DNA replication and chromosomal stability. DNA accessibility is regulated via a complex set of post-translational modifications of histones, also called histone code, and nucleosome remodeling. This chain is Histone H2A.v3 (H2Av3), found in Dictyostelium discoideum (Social amoeba).